The sequence spans 288 residues: Ubiquitin thioesterase otubain-like (288 aa).

The region spanning 76–275 is the OTU domain; sequence SHIRFIRGDG…PGHYDLIYKA (200 aa). Asp84 is an active-site residue. Cys87 (nucleophile) is an active-site residue. Position 175 (Ile175) interacts with substrate. Residues His244 and His268 contribute to the active site.

The protein belongs to the peptidase C65 family.

It catalyses the reaction Thiol-dependent hydrolysis of ester, thioester, amide, peptide and isopeptide bonds formed by the C-terminal Gly of ubiquitin (a 76-residue protein attached to proteins as an intracellular targeting signal).. Hydrolase that can remove conjugated ubiquitin from proteins and plays an important regulatory role at the level of protein turnover by preventing degradation. Specifically cleaves 'Lys-48'-linked polyubiquitin. The protein is Ubiquitin thioesterase otubain-like of Caenorhabditis briggsae.